Here is a 394-residue protein sequence, read N- to C-terminus: Elongation factor Tu (394 aa).

Residues 10–204 (KPHVNIGTIG…AVDSWIPLPE (195 aa)) enclose the tr-type G domain. A G1 region spans residues 19–26 (GHVDHGKT). A GTP-binding site is contributed by 19–26 (GHVDHGKT). T26 contributes to the Mg(2+) binding site. The G2 stretch occupies residues 60-64 (GITIN). The segment at 81-84 (DCPG) is G3. GTP contacts are provided by residues 81 to 85 (DCPGH) and 136 to 139 (NKCD). The interval 136 to 139 (NKCD) is G4. The tract at residues 174 to 176 (SGL) is G5.

This sequence belongs to the TRAFAC class translation factor GTPase superfamily. Classic translation factor GTPase family. EF-Tu/EF-1A subfamily. As to quaternary structure, monomer.

The protein localises to the cytoplasm. It carries out the reaction GTP + H2O = GDP + phosphate + H(+). GTP hydrolase that promotes the GTP-dependent binding of aminoacyl-tRNA to the A-site of ribosomes during protein biosynthesis. This is Elongation factor Tu from Ureaplasma urealyticum serovar 10 (strain ATCC 33699 / Western).